Reading from the N-terminus, the 425-residue chain is Acyl-lipid (8-3)-desaturase (425 aa).

A disordered region spans residues 1–25 (MPPRDSYSYAAPPSAQLHEVDTPQE). Residues 18 to 93 (HEVDTPQEHD…SRPVHKGYSP (76 aa)) form the Cytochrome b5 heme-binding domain. Heme-binding residues include His47 and His69. Residues 134–154 (VAGAALIWHGYTFAGIAMLGV) form a helical membrane-spanning segment. The short motif at 164–168 (HEGGH) is the Histidine box-1 element. Residues 175–197 (IAFDRAIQVACYGLGCGMSGAWW) traverse the membrane as a helical segment. The Histidine box-2 motif lies at 201-206 (HNKHHA). Helical transmembrane passes span 241–261 (WLSM…ALGW) and 297–317 (GAGY…MYIF). Positions 365–369 (QIEHH) match the Histidine box-3 motif.

This sequence belongs to the fatty acid desaturase type 1 family. It depends on Fe(2+) as a cofactor.

It localises to the membrane. The enzyme catalyses an (8Z,11Z,14Z)-icosatrienoyl-containing glycerolipid + 2 Fe(II)-[cytochrome b5] + O2 + 2 H(+) = (5Z,8Z,11Z,14Z)-eicosatetraenoyl-containing glycerolipid + 2 Fe(III)-[cytochrome b5] + 2 H2O. It carries out the reaction an (8Z,11Z,14Z,17Z)-eicosatetraenoyl-containing glycerolipid + 2 Fe(II)-[cytochrome b5] + O2 + 2 H(+) = a (5Z,8Z,11Z,14Z,17Z)-eicosapentaenoyl-containing glycerolipid + 2 Fe(III)-[cytochrome b5] + 2 H2O. Its function is as follows. Fatty acid desaturase that introduces a cis double bond at the 5-position in 20-carbon polyunsaturated fatty acids incorporated in a glycerolipid that contain a Delta(8) double bond. The sequence is that of Acyl-lipid (8-3)-desaturase from Rebecca salina (Marine microalga).